Here is a 414-residue protein sequence, read N- to C-terminus: Stork-head box protein ham-1 (414 aa).

The interval 1-31 (MTYLAVVLNGPKAKNGRKVFDSFLEQNRQMF) is essential for association with cell cortex. Residues 93-170 (QQVEQMHFVP…MADHYFVSVP (78 aa)) form the Winged helix Storkhead-box1 domain. Residues 282 to 362 (ECQRKARRRN…SNEEAGSISD (81 aa)) form a disordered region. Residues 285 to 295 (RKARRRNHPRR) form a bi-partite nuclear localization signal region. Residues 321–327 (PTRRRAR) are nuclear localization signal. The segment covering 332–351 (LRSSTPNNSDSAYSISPPHT) has biased composition (polar residues).

It localises to the cytoplasm. It is found in the cell cortex. The protein resides in the nucleus. Functionally, probable transcription factor. Required for asymmetric cell division in neuroblasts, perhaps acting by regulating spindle positioning and myosin polarization, and thus the position of the cleavage plane. Required to produce daughter cell size asymmetry in neuroblasts undergoing asymmetric cell division, usually giving rise to one precursor cell and one apoptotic cell. Positively modulates expression of the serine/threonine kinase pig-1/MELK during asymmetric division of the Q.a neuroblast. Plays a role in neural fate specification in several dopaminergic lineages, including the hermaphrodite-specific neuron (HSN)/phasmid neuron (PHB), acting in concert with the kinase, ham-1, and the T-box protein tbx-2 and the homeobox protein egl-5. The chain is Stork-head box protein ham-1 from Caenorhabditis elegans.